Here is a 347-residue protein sequence, read N- to C-terminus: NADH-ubiquinone oxidoreductase chain 2 (347 aa).

Helical transmembrane passes span 4–21 (LALI…VIVM), 26–44 (WLLV…IPVL), 59–79 (YFLT…TNLL), 93–115 (LAST…HFWV), 149–169 (LNLN…GWGG), 178–198 (ILAY…TYNP), 200–220 (LTLL…MLFM), 241–261 (ATSV…SGFL), 274–294 (ESIF…YFYM), and 323–343 (TPLL…APIL).

The protein belongs to the complex I subunit 2 family. In terms of assembly, core subunit of respiratory chain NADH dehydrogenase (Complex I) which is composed of 45 different subunits. Interacts with TMEM242.

Its subcellular location is the mitochondrion inner membrane. The catalysed reaction is a ubiquinone + NADH + 5 H(+)(in) = a ubiquinol + NAD(+) + 4 H(+)(out). Core subunit of the mitochondrial membrane respiratory chain NADH dehydrogenase (Complex I) which catalyzes electron transfer from NADH through the respiratory chain, using ubiquinone as an electron acceptor. Essential for the catalytic activity and assembly of complex I. The protein is NADH-ubiquinone oxidoreductase chain 2 of Cardioderma cor (Heart-nosed bat).